A 109-amino-acid chain; its full sequence is Nucleoid-associated protein VV1_2004 (109 aa).

The protein belongs to the YbaB/EbfC family. Homodimer.

The protein resides in the cytoplasm. It is found in the nucleoid. In terms of biological role, binds to DNA and alters its conformation. May be involved in regulation of gene expression, nucleoid organization and DNA protection. The protein is Nucleoid-associated protein VV1_2004 of Vibrio vulnificus (strain CMCP6).